We begin with the raw amino-acid sequence, 188 residues long: Elongation factor P (188 aa).

Belongs to the elongation factor P family.

It localises to the cytoplasm. It participates in protein biosynthesis; polypeptide chain elongation. Involved in peptide bond synthesis. Stimulates efficient translation and peptide-bond synthesis on native or reconstituted 70S ribosomes in vitro. Probably functions indirectly by altering the affinity of the ribosome for aminoacyl-tRNA, thus increasing their reactivity as acceptors for peptidyl transferase. The sequence is that of Elongation factor P from Paramagnetospirillum magneticum (strain ATCC 700264 / AMB-1) (Magnetospirillum magneticum).